The sequence spans 120 residues: MRLLAQLLGLLMLWVPGSSGDIVMTQTPLSSPVTLGQPASISFRSSQSLVHSDGNTYLSWLQQRPGQPPRLLIYKVSNRFSGVPDRFSGSGAGTDFTLKISRVEAEDVGVYYCTQATQFP.

Positions 1–19 are cleaved as a signal peptide; it reads MRLLAQLLGLLMLWVPGSS. The Ig-like domain maps to 20 to 120; it reads GDIVMTQTPL…YYCTQATQFP (101 aa). Positions 21 to 43 are framework-1; sequence DIVMTQTPLSSPVTLGQPASISF. The complementarity-determining-1 stretch occupies residues 44-59; the sequence is RSSQSLVHSDGNTYLS. The interval 60–74 is framework-2; the sequence is WLQQRPGQPPRLLIY. Positions 75–81 are complementarity-determining-2; that stretch reads KVSNRFS. The interval 82–113 is framework-3; the sequence is GVPDRFSGSGAGTDFTLKISRVEAEDVGVYYC. The interval 114-120 is complementarity-determining-3; it reads TQATQFP.

As to quaternary structure, most probably, the immunoglobulin is not assembled due to incorrect folding of light chain. Immunoglobulins are composed of two identical heavy chains and two identical light chains; disulfide-linked.

The protein resides in the secreted. The protein localises to the cell membrane. Probable non-functional open reading frame (ORF) of V region of the variable domain of immunoglobulin light chains. Non-functional ORF generally cannot participate in the synthesis of a productive immunoglobulin chain due to altered V-(D)-J or switch recombination and/or splicing site (at mRNA level) and/or conserved amino acid change (protein level). Immunoglobulins, also known as antibodies, are membrane-bound or secreted glycoproteins produced by B lymphocytes. In the recognition phase of humoral immunity, the membrane-bound immunoglobulins serve as receptors which, upon binding of a specific antigen, trigger the clonal expansion and differentiation of B lymphocytes into immunoglobulins-secreting plasma cells. Secreted immunoglobulins mediate the effector phase of humoral immunity, which results in the elimination of bound antigens. The antigen binding site is formed by the variable domain of one heavy chain, together with that of its associated light chain. Thus, each immunoglobulin has two antigen binding sites with remarkable affinity for a particular antigen. The variable domains are assembled by a process called V-(D)-J rearrangement and can then be subjected to somatic hypermutations which, after exposure to antigen and selection, allow affinity maturation for a particular antigen. This Homo sapiens (Human) protein is Probable non-functional immunoglobulin kappa variable 2D-24.